The chain runs to 248 residues: Triosephosphate isomerase (248 aa).

9–11 (NWK) contacts substrate. H93 (electrophile) is an active-site residue. The active-site Proton acceptor is the E163. Substrate is bound by residues G169, S208, and 229–230 (GG).

The protein belongs to the triosephosphate isomerase family. Homodimer.

Its subcellular location is the cytoplasm. It carries out the reaction D-glyceraldehyde 3-phosphate = dihydroxyacetone phosphate. The protein operates within carbohydrate biosynthesis; gluconeogenesis. It functions in the pathway carbohydrate degradation; glycolysis; D-glyceraldehyde 3-phosphate from glycerone phosphate: step 1/1. Its function is as follows. Involved in the gluconeogenesis. Catalyzes stereospecifically the conversion of dihydroxyacetone phosphate (DHAP) to D-glyceraldehyde-3-phosphate (G3P). This Jannaschia sp. (strain CCS1) protein is Triosephosphate isomerase.